A 276-amino-acid polypeptide reads, in one-letter code: Prohibitin 1 (276 aa).

It belongs to the prohibitin family.

Required for larval metabolism or for the progression of the larva into a pupa. This is Prohibitin 1 from Drosophila melanogaster (Fruit fly).